A 428-amino-acid polypeptide reads, in one-letter code: Trigger factor (428 aa).

The PPIase FKBP-type domain occupies 163 to 248 (GDTAVIDFEG…VHEIKEKRLP (86 aa)).

Belongs to the FKBP-type PPIase family. Tig subfamily.

It is found in the cytoplasm. The catalysed reaction is [protein]-peptidylproline (omega=180) = [protein]-peptidylproline (omega=0). Involved in protein export. Acts as a chaperone by maintaining the newly synthesized protein in an open conformation. Functions as a peptidyl-prolyl cis-trans isomerase. This Geobacillus sp. (strain WCH70) protein is Trigger factor.